The sequence spans 241 residues: Probable transcriptional regulatory protein FMG_0893 (241 aa).

This sequence belongs to the TACO1 family.

It localises to the cytoplasm. In Finegoldia magna (strain ATCC 29328 / DSM 20472 / WAL 2508) (Peptostreptococcus magnus), this protein is Probable transcriptional regulatory protein FMG_0893.